Consider the following 508-residue polypeptide: Phenylalanine--tRNA ligase alpha subunit (508 aa).

Alanine 2 is subject to N-acetylalanine. At threonine 190 the chain carries Phosphothreonine. Residues serine 193 and serine 301 each carry the phosphoserine modification. Position 311 is an N6-acetyllysine (lysine 311). L-phenylalanine-binding positions include threonine 329, glutamine 372–glutamate 374, and tyrosine 412. Residue glutamate 414 coordinates Mg(2+). Phenylalanine 438 provides a ligand contact to L-phenylalanine.

Belongs to the class-II aminoacyl-tRNA synthetase family. Phe-tRNA synthetase alpha subunit type 2 subfamily. As to quaternary structure, heterotetramer; dimer of two heterodimers formed by FARSA and FARSB.

It localises to the cytoplasm. The catalysed reaction is tRNA(Phe) + L-phenylalanine + ATP = L-phenylalanyl-tRNA(Phe) + AMP + diphosphate + H(+). The sequence is that of Phenylalanine--tRNA ligase alpha subunit (FARSA) from Homo sapiens (Human).